We begin with the raw amino-acid sequence, 294 residues long: 4-hydroxy-tetrahydrodipicolinate synthase (294 aa).

Residue threonine 44 coordinates pyruvate. The Proton donor/acceptor role is filled by tyrosine 132. Residue lysine 160 is the Schiff-base intermediate with substrate of the active site. Residue isoleucine 205 coordinates pyruvate.

It belongs to the DapA family. As to quaternary structure, homotetramer; dimer of dimers.

It localises to the cytoplasm. The catalysed reaction is L-aspartate 4-semialdehyde + pyruvate = (2S,4S)-4-hydroxy-2,3,4,5-tetrahydrodipicolinate + H2O + H(+). Its pathway is amino-acid biosynthesis; L-lysine biosynthesis via DAP pathway; (S)-tetrahydrodipicolinate from L-aspartate: step 3/4. Functionally, catalyzes the condensation of (S)-aspartate-beta-semialdehyde [(S)-ASA] and pyruvate to 4-hydroxy-tetrahydrodipicolinate (HTPA). This is 4-hydroxy-tetrahydrodipicolinate synthase from Kosmotoga olearia (strain ATCC BAA-1733 / DSM 21960 / TBF 19.5.1).